Here is an 881-residue protein sequence, read N- to C-terminus: Alanine--tRNA ligase (881 aa).

4 residues coordinate Zn(2+): His-563, His-567, Cys-672, and His-676.

The protein belongs to the class-II aminoacyl-tRNA synthetase family. It depends on Zn(2+) as a cofactor.

Its subcellular location is the cytoplasm. It catalyses the reaction tRNA(Ala) + L-alanine + ATP = L-alanyl-tRNA(Ala) + AMP + diphosphate. Catalyzes the attachment of alanine to tRNA(Ala) in a two-step reaction: alanine is first activated by ATP to form Ala-AMP and then transferred to the acceptor end of tRNA(Ala). Also edits incorrectly charged Ser-tRNA(Ala) and Gly-tRNA(Ala) via its editing domain. The sequence is that of Alanine--tRNA ligase from Azorhizobium caulinodans (strain ATCC 43989 / DSM 5975 / JCM 20966 / LMG 6465 / NBRC 14845 / NCIMB 13405 / ORS 571).